The sequence spans 635 residues: MSAVSSIFDTPIPSAAKSSPSGSNKRPLAQNGHHSGEKQSKKSKKASKKQLIDLLVQEHARELSQNDSSASTVSTPKKKKKKNASASDINTSASKNVNAAKKKPKEGLKINLQNSKKKRKNFEVLNSSQQHADDALVETSFNGESLKNNSNHSTPVSKKPKKKNKQMPHPLAGTPNLAIKQEPQTPKANGMQRTSAQDSIVVGREKFAWVIHPTPVEDFMINYWEKKPLLIQRKNPSYYSNLLSRAKIDEMLRQNNIEYTKNIDVTSYREGQRETHNPDGRVLPPDMWSFYEEGCSIRMLNPQTYLPGVYEMNVKLQEFFHCMTGANFYLTPPNSQGFAPHYDDIEAFVLQVEGRKHWKLYSPREPAEMLARVSSPNFTQEEIGTPILEVVLEPGDLLYFPRGIIHQASTVPGHHSLHVTMSVYQKNCWADLLELFFPHALAQAAETHFDLRRGIPLNLHQHFGIVHSDSETPARKQLISHIKSLVDKVFSEDAIDSAVDQLAKRFQHDALPPLISNTEQSTTVYGSSFSHNPDGTVSLRVPFTENSTVRLLRCNVLRLVSEEEKLRIYYHTDNSREYHEYEPNFLEIDQDAALGVELLVKMYPHPVAIRDLPVEDKIEFAKSLWEKGLIVVHGQ.

Disordered regions lie at residues 1 to 115 (MSAV…LQNS) and 141 to 190 (FNGE…KANG). Over residues 84 to 99 (ASASDINTSASKNVNA) the composition is skewed to low complexity. Residues 141–156 (FNGESLKNNSNHSTPV) are compositionally biased toward polar residues. Residues 295–440 (CSIRMLNPQT…DLLELFFPHA (146 aa)) form the JmjC domain. Positions 341, 343, and 406 each coordinate Fe cation.

Belongs to the ROX family. NO66 subfamily. Requires Fe(2+) as cofactor.

The protein resides in the nucleus. The catalysed reaction is N(6),N(6)-dimethyl-L-lysyl(36)-[histone H3] + 2 2-oxoglutarate + 2 O2 = L-lysyl(36)-[histone H3] + 2 formaldehyde + 2 succinate + 2 CO2. In terms of biological role, oxygenase that can act as both a histone lysine demethylase and a ribosomal histidine hydroxylase. Specifically demethylates 'Lys-4' (H3K4me) and 'Lys-36' (H3K36me) of histone H3, thereby playing a central role in histone code. This chain is Bifunctional lysine-specific demethylase and histidyl-hydroxylase NO66, found in Aedes aegypti (Yellowfever mosquito).